The sequence spans 434 residues: ATP-dependent protease ATPase subunit HslU (434 aa).

ATP is bound by residues isoleucine 18, 60 to 65 (GVGKTE), aspartate 247, glutamate 312, and arginine 384.

The protein belongs to the ClpX chaperone family. HslU subfamily. In terms of assembly, a double ring-shaped homohexamer of HslV is capped on each side by a ring-shaped HslU homohexamer. The assembly of the HslU/HslV complex is dependent on binding of ATP.

It is found in the cytoplasm. In terms of biological role, ATPase subunit of a proteasome-like degradation complex; this subunit has chaperone activity. The binding of ATP and its subsequent hydrolysis by HslU are essential for unfolding of protein substrates subsequently hydrolyzed by HslV. HslU recognizes the N-terminal part of its protein substrates and unfolds these before they are guided to HslV for hydrolysis. The protein is ATP-dependent protease ATPase subunit HslU of Sinorhizobium fredii (strain NBRC 101917 / NGR234).